The primary structure comprises 615 residues: Mitochondrial distribution and morphology protein 34 (615 aa).

Residues 1–195 enclose the SMP-LTD domain; that stretch reads MAFNFNWSPL…LPAIIHRLSL (195 aa). Disordered stretches follow at residues 293 to 313, 346 to 566, and 596 to 615; these read SDKP…RTSS, ATTG…PQPD, and PAFW…YEPR. Over residues 301–313 the composition is skewed to polar residues; the sequence is TPASTPNLHRTSS. Over residues 346 to 355 the composition is skewed to low complexity; that stretch reads ATTGLSLGSG. The segment covering 356-367 has biased composition (basic residues); that stretch reads RHSKAGRKKKMR. 3 stretches are compositionally biased toward polar residues: residues 384–403, 435–446, and 457–499; these read IGST…TRTP, DATTSARASESS, and VTAQ…YSSR. Residues 517–557 show a composition bias toward low complexity; it reads QQQQFQQQQQQQQQQQQQQQQQQQQQQQQQQQQQQQQQQQQ. The segment covering 596–606 has biased composition (basic and acidic residues); that stretch reads PAFWEDSHQHD.

Belongs to the MDM34 family. Component of the ER-mitochondria encounter structure (ERMES) or MDM complex, composed of mmm-1, mdm10, mdm12 and mdm34.

The protein localises to the mitochondrion outer membrane. Its function is as follows. Component of the ERMES/MDM complex, which serves as a molecular tether to connect the endoplasmic reticulum (ER) and mitochondria. Components of this complex are involved in the control of mitochondrial shape and protein biogenesis, and function in nonvesicular lipid trafficking between the ER and mitochondria. Mdm34 is required for the interaction of the ER-resident membrane protein mmm-1 and the outer mitochondrial membrane-resident beta-barrel protein mdm10. The protein is Mitochondrial distribution and morphology protein 34 of Neurospora crassa (strain ATCC 24698 / 74-OR23-1A / CBS 708.71 / DSM 1257 / FGSC 987).